We begin with the raw amino-acid sequence, 1239 residues long: Codanin-1 (1239 aa).

A2 bears the N-acetylalanine mark. Polar residues predominate over residues 61–72 (SRVLPQGPSTPA). 2 disordered regions span residues 61–249 (SRVL…PPGC) and 261–299 (KARTKQLQQSPTPASPIPESGSPVPSRTGNLTAEPADPA). T70 is modified (phosphothreonine). Low complexity-rich tracts occupy residues 77–88 (ASAALPARQGAP), 95–116 (ARSQLFPAAEPLSAAAEAPLAR), and 138–179 (GAAE…LSNL). The tract at residues 193–213 (AGRTKPSRRINPTPVSEERSL) is interaction with ASF1A/B. Residues 219–238 (CFTSPPISCVPSSQPSTLDT) are compositionally biased toward polar residues. The residue at position 270 (S270) is a Phosphoserine. 2 helical membrane-spanning segments follow: residues 317–337 (CIAENLVPNLFLELFFVLQLL) and 631–651 (FAVVLLSLRLLAKFLGFVAFL).

As to quaternary structure, interacts with ASF1A and ASF1B. Found in a cytosolic complex with ASF1A, ASF1B, IPO4 and histones H3.1 and H4. In terms of tissue distribution, widely expressed in adult mice, the highest levels can be measured in erythropoietic cells.

Its subcellular location is the cytoplasm. The protein localises to the nucleus. It is found in the membrane. May act as a negative regulator of ASF1 in chromatin assembly. The polypeptide is Codanin-1 (Cdan1) (Mus musculus (Mouse)).